Consider the following 257-residue polypeptide: 5'-nucleotidase SurE (257 aa).

4 residues coordinate a divalent metal cation: D9, D10, S40, and N92.

The protein belongs to the SurE nucleotidase family. A divalent metal cation is required as a cofactor.

It localises to the cytoplasm. The enzyme catalyses a ribonucleoside 5'-phosphate + H2O = a ribonucleoside + phosphate. Nucleotidase that shows phosphatase activity on nucleoside 5'-monophosphates. This chain is 5'-nucleotidase SurE, found in Alkalilimnicola ehrlichii (strain ATCC BAA-1101 / DSM 17681 / MLHE-1).